The chain runs to 335 residues: Glyceraldehyde-3-phosphate dehydrogenase 2 (335 aa).

NAD(+) contacts are provided by residues 13-14 and Gly111; that span reads TI. Position 140–142 (140–142) interacts with D-glyceraldehyde 3-phosphate; sequence SCN. The active-site Nucleophile is Cys141. Position 169 (Arg169) interacts with NAD(+). D-glyceraldehyde 3-phosphate contacts are provided by residues Thr171 and 195–196; that span reads HG. Gln300 provides a ligand contact to NAD(+).

This sequence belongs to the glyceraldehyde-3-phosphate dehydrogenase family. Homotetramer.

Its subcellular location is the cytoplasm. The enzyme catalyses D-glyceraldehyde 3-phosphate + phosphate + NADP(+) = (2R)-3-phospho-glyceroyl phosphate + NADPH + H(+). It catalyses the reaction D-glyceraldehyde 3-phosphate + phosphate + NAD(+) = (2R)-3-phospho-glyceroyl phosphate + NADH + H(+). It functions in the pathway carbohydrate degradation; glycolysis; pyruvate from D-glyceraldehyde 3-phosphate: step 1/5. This Methanosarcina acetivorans (strain ATCC 35395 / DSM 2834 / JCM 12185 / C2A) protein is Glyceraldehyde-3-phosphate dehydrogenase 2 (gapB).